The primary structure comprises 524 residues: Bifunctional purine biosynthesis protein PurH (524 aa).

The MGS-like domain occupies 1-144 (MTRRALVSVS…KNSAHVGVVV (144 aa)).

The protein belongs to the PurH family.

The catalysed reaction is (6R)-10-formyltetrahydrofolate + 5-amino-1-(5-phospho-beta-D-ribosyl)imidazole-4-carboxamide = 5-formamido-1-(5-phospho-D-ribosyl)imidazole-4-carboxamide + (6S)-5,6,7,8-tetrahydrofolate. The enzyme catalyses IMP + H2O = 5-formamido-1-(5-phospho-D-ribosyl)imidazole-4-carboxamide. It functions in the pathway purine metabolism; IMP biosynthesis via de novo pathway; 5-formamido-1-(5-phospho-D-ribosyl)imidazole-4-carboxamide from 5-amino-1-(5-phospho-D-ribosyl)imidazole-4-carboxamide (10-formyl THF route): step 1/1. It participates in purine metabolism; IMP biosynthesis via de novo pathway; IMP from 5-formamido-1-(5-phospho-D-ribosyl)imidazole-4-carboxamide: step 1/1. This chain is Bifunctional purine biosynthesis protein PurH, found in Anaeromyxobacter dehalogenans (strain 2CP-C).